A 696-amino-acid polypeptide reads, in one-letter code: Polyribonucleotide nucleotidyltransferase (696 aa).

Mg(2+) is bound by residues Asp483 and Asp489. Residues 550-609 enclose the KH domain; sequence PRITTIWVKVDKIRDVIGSGGKNIRSVTEATGVSIDIDDTGKINIASTNKEACDLAIKMI. Positions 619–687 constitute an S1 motif domain; the sequence is GKLYMGTVKK…KQGKIKLSRK (69 aa).

The protein belongs to the polyribonucleotide nucleotidyltransferase family. Mg(2+) serves as cofactor.

It localises to the cytoplasm. The enzyme catalyses RNA(n+1) + phosphate = RNA(n) + a ribonucleoside 5'-diphosphate. Functionally, involved in mRNA degradation. Catalyzes the phosphorolysis of single-stranded polyribonucleotides processively in the 3'- to 5'-direction. The polypeptide is Polyribonucleotide nucleotidyltransferase (Geobacter sp. (strain M21)).